The sequence spans 840 residues: Homeobox-leucine zipper protein HOX9 (840 aa).

Disordered regions lie at residues 1 to 26 and 135 to 160; these read MAAA…AGMD and NPSL…DASN. The segment covering 12 to 21 has biased composition (gly residues); the sequence is GSDGGGGGYD. A DNA-binding region (homeobox) is located at residues 26 to 89; the sequence is DSGKYVRYTP…NRRCRDKQRK (64 aa). The stretch at 86–135 forms a coiled coil; sequence KQRKEASRLQAVNRKLTAMNKLLMEENERLQKQVSQLVHENAYMKQQLQN. An START domain is found at 157-385; sequence DASNPSGLLT…IAQETSGEVV (229 aa).

This sequence belongs to the HD-ZIP homeobox family. Class III subfamily. In terms of tissue distribution, expressed in seedlings, roots, stems, leaf sheaths and blades and panicles.

It is found in the nucleus. Probable transcription factor. This Oryza sativa subsp. indica (Rice) protein is Homeobox-leucine zipper protein HOX9 (HOX9).